Reading from the N-terminus, the 941-residue chain is Cilia- and flagella-associated protein 69 (941 aa).

Residues 1–10 (MWTEEAAATA) show a composition bias toward low complexity. A disordered region spans residues 1 to 23 (MWTEEAAATAEARESGIRNKSSS).

It localises to the cell projection. The protein resides in the cilium. It is found in the flagellum. Cilium- and flagellum-associated protein. In the olfactory epithelium, regulates the speed of activation and termination of the odor response and thus contributes to the robustness of olfactory transduction pathways. Required for sperm flagellum assembly and stability. This chain is Cilia- and flagella-associated protein 69, found in Papio anubis (Olive baboon).